A 184-amino-acid polypeptide reads, in one-letter code: F(420)H(2) dehydrogenase subunit B (184 aa).

The disordered stretch occupies residues 1 to 20; sequence MGEVKETKTNNSKENPEEEV. Residues cysteine 61, cysteine 62, cysteine 126, and cysteine 156 each contribute to the [4Fe-4S] cluster site.

It belongs to the complex I 20 kDa subunit family. As to quaternary structure, the FPO complex is composed of at least 13 different subunits. Requires FAD as cofactor. It depends on [4Fe-4S] cluster as a cofactor.

The protein localises to the cell inner membrane. The catalysed reaction is methanophenazine + reduced coenzyme F420-(gamma-L-Glu)(n) = dihydromethanophenazine + oxidized coenzyme F420-(gamma-L-Glu)(n) + H(+). Functionally, component of the F(420)H(2) dehydrogenase (FPO complex) which is part of the energy-conserving F(420)H(2):heterodisulfide oxidoreductase system. The membrane-bound electron transfer system of the complex plays an important role in the metabolism of methylotrophic methanogens when the organisms grow on methanol or methylamines. Catalyzes the oxidation of methanophenazine to dihydromethanophenazine. It shuttles electrons from F(420)H(2), via FAD and iron-sulfur (Fe-S) centers, to methanophenazine (an electron carrier in the membrane). It couples the redox reaction to proton translocation (for every two electrons transferred, two hydrogen ions are translocated across the cytoplasmic membrane), and thus conserves the redox energy in a proton gradient. It also catalyzes the oxidation of F(420)H(2) with quinones such as 2,3-dimethyl-1,4-naphthoquinone, 2-methyl-1,4-naphthoquinone and tetramethyl-p-benzoquinone. The chain is F(420)H(2) dehydrogenase subunit B (fpoB) from Methanosarcina mazei (strain ATCC BAA-159 / DSM 3647 / Goe1 / Go1 / JCM 11833 / OCM 88) (Methanosarcina frisia).